Reading from the N-terminus, the 218-residue chain is Small ribosomal subunit protein uS3c (218 aa).

The KH type-2 domain maps to 47–118; that stretch reads VQKNMRISSG…RLNIAITRVA (72 aa).

It belongs to the universal ribosomal protein uS3 family. Part of the 30S ribosomal subunit.

The protein localises to the plastid. It is found in the chloroplast. In Calycanthus floridus var. glaucus (Eastern sweetshrub), this protein is Small ribosomal subunit protein uS3c (rps3).